Consider the following 197-residue polypeptide: Large ribosomal subunit protein uL22 (197 aa).

A disordered region spans residues 118–197 (ESRPAKDQRS…ETSAAKGGSD (80 aa)). Residues 149 to 165 (APAKKAAAKAPAKKAPA) are compositionally biased toward low complexity. The segment covering 172 to 183 (TPAKKAPAKKAP) has biased composition (basic residues). Residues 184-197 (AKASETSAAKGGSD) show a composition bias toward low complexity.

The protein belongs to the universal ribosomal protein uL22 family. Part of the 50S ribosomal subunit.

This protein binds specifically to 23S rRNA; its binding is stimulated by other ribosomal proteins, e.g. L4, L17, and L20. It is important during the early stages of 50S assembly. It makes multiple contacts with different domains of the 23S rRNA in the assembled 50S subunit and ribosome. Functionally, the globular domain of the protein is located near the polypeptide exit tunnel on the outside of the subunit, while an extended beta-hairpin is found that lines the wall of the exit tunnel in the center of the 70S ribosome. This is Large ribosomal subunit protein uL22 from Mycobacterium bovis (strain ATCC BAA-935 / AF2122/97).